A 152-amino-acid chain; its full sequence is Cell division protein SepF (152 aa).

The span at 23–32 (EVAREPEPMQ) shows a compositional bias: basic and acidic residues. The disordered stretch occupies residues 23–42 (EVAREPEPMQKKTKKEKPSK).

It belongs to the SepF family. As to quaternary structure, homodimer. Interacts with FtsZ.

Its subcellular location is the cytoplasm. In terms of biological role, cell division protein that is part of the divisome complex and is recruited early to the Z-ring. Probably stimulates Z-ring formation, perhaps through the cross-linking of FtsZ protofilaments. Its function overlaps with FtsA. This chain is Cell division protein SepF, found in Listeria welshimeri serovar 6b (strain ATCC 35897 / DSM 20650 / CCUG 15529 / CIP 8149 / NCTC 11857 / SLCC 5334 / V8).